The chain runs to 244 residues: Probable transcriptional regulatory protein Aasi_0624 (244 aa).

This sequence belongs to the TACO1 family.

It localises to the cytoplasm. The sequence is that of Probable transcriptional regulatory protein Aasi_0624 from Amoebophilus asiaticus (strain 5a2).